The following is a 186-amino-acid chain: Crossover junction endodeoxyribonuclease RuvC (186 aa).

Catalysis depends on residues D7, E73, and D145. 3 residues coordinate Mg(2+): D7, E73, and D145.

This sequence belongs to the RuvC family. Homodimer which binds Holliday junction (HJ) DNA. The HJ becomes 2-fold symmetrical on binding to RuvC with unstacked arms; it has a different conformation from HJ DNA in complex with RuvA. In the full resolvosome a probable DNA-RuvA(4)-RuvB(12)-RuvC(2) complex forms which resolves the HJ. The cofactor is Mg(2+).

The protein resides in the cytoplasm. The catalysed reaction is Endonucleolytic cleavage at a junction such as a reciprocal single-stranded crossover between two homologous DNA duplexes (Holliday junction).. The RuvA-RuvB-RuvC complex processes Holliday junction (HJ) DNA during genetic recombination and DNA repair. Endonuclease that resolves HJ intermediates. Cleaves cruciform DNA by making single-stranded nicks across the HJ at symmetrical positions within the homologous arms, yielding a 5'-phosphate and a 3'-hydroxyl group; requires a central core of homology in the junction. The consensus cleavage sequence is 5'-(A/T)TT(C/G)-3'. Cleavage occurs on the 3'-side of the TT dinucleotide at the point of strand exchange. HJ branch migration catalyzed by RuvA-RuvB allows RuvC to scan DNA until it finds its consensus sequence, where it cleaves and resolves the cruciform DNA. This Acidovorax sp. (strain JS42) protein is Crossover junction endodeoxyribonuclease RuvC.